A 331-amino-acid polypeptide reads, in one-letter code: MLNWTAGFLVLIAKLTIVLAVLLLVAAYLVWLERKFLARLQIRYGPNRAGKFGLLQPIADIVKMVAKEDTVPEGAERTIFMLAPAVVAATALLVFAVIPFGKDVTLWGMKIPLVVADLNVGLLYFFALSSLGVYGVALGGWASNSKYSLLGGIRGAAQMISYELSLGLAIVPVVMQARSFSLVDIVQAQEKYPFILTQPVAFAIFVISAMAEIKRIPFDLPEAENELGAGFHTEYSGMRFGLFFLGEYVNMQVLGGLVAVLFLGGWHGPLLPPVVWLFIKIVLVALIMIWVRGTLPRLRYDQLMALGWKVLIPLALVNIMVTGAWVLWMGK.

8 helical membrane passes run 6–26, 79–99, 120–140, 155–175, 193–213, 242–262, 271–291, and 310–330; these read AGFLVLIAKLTIVLAVLLLVA, IFMLAPAVVAATALLVFAVIP, VGLLYFFALSSLGVYGVALGG, GAAQMISYELSLGLAIVPVVM, PFILTQPVAFAIFVISAMAEI, LFFLGEYVNMQVLGGLVAVLF, LPPVVWLFIKIVLVALIMIWV, and VLIPLALVNIMVTGAWVLWMG.

This sequence belongs to the complex I subunit 1 family. As to quaternary structure, NDH-1 is composed of 14 different subunits. Subunits NuoA, H, J, K, L, M, N constitute the membrane sector of the complex.

It is found in the cell inner membrane. The enzyme catalyses a quinone + NADH + 5 H(+)(in) = a quinol + NAD(+) + 4 H(+)(out). Functionally, NDH-1 shuttles electrons from NADH, via FMN and iron-sulfur (Fe-S) centers, to quinones in the respiratory chain. The immediate electron acceptor for the enzyme in this species is believed to be ubiquinone. Couples the redox reaction to proton translocation (for every two electrons transferred, four hydrogen ions are translocated across the cytoplasmic membrane), and thus conserves the redox energy in a proton gradient. This subunit may bind ubiquinone. The sequence is that of NADH-quinone oxidoreductase subunit H 2 from Syntrophobacter fumaroxidans (strain DSM 10017 / MPOB).